The sequence spans 667 residues: Single-minded homolog 2 (667 aa).

Residues 1-53 (MKEKSKNAAKTRREKENGEFYELAKLLPLPSAITSQLDKASIIRLTTSYLKMR) enclose the bHLH domain. 2 PAS domains span residues 77–149 (AKEL…LHHH) and 218–288 (PPSA…LVKG). The region spanning 292–335 (TKYYRLLSKRGGWVWVQSYATVVHNSRSSRPHCIVSVNYVLTEI) is the PAC domain. The Single-minded C-terminal domain maps to 336–667 (EYKELQLSLE…GASVIITNGR (332 aa)). Disordered regions lie at residues 356 to 389 (WRTA…YPPQ), 409 to 428 (ASPP…SESS), and 500 to 520 (SSSS…RHSL). A Nuclear localization signal motif is present at residues 367–386 (RKLVKPKNTKMKTKLRTNPY). A compositionally biased stretch (basic residues) spans 369-381 (LVKPKNTKMKTKL). Residues 409–419 (ASPPASAAAPP) are compositionally biased toward low complexity.

As to quaternary structure, efficient DNA binding requires dimerization with another bHLH protein. Heterodimer of SIM2 and ARNT.

The protein localises to the nucleus. Functionally, transcription factor that may be a master gene of CNS development in cooperation with Arnt. It may have pleiotropic effects in the tissues expressed during development. The protein is Single-minded homolog 2 (SIM2) of Homo sapiens (Human).